A 147-amino-acid chain; its full sequence is Protein phosphatase 1 regulatory subunit 14A (147 aa).

A compositionally biased stretch (basic residues) spans 1-11; it reads MAAQRLGKRVL. The segment at 1 to 36 is disordered; sequence MAAQRLGKRVLSKLQSPSRARGPGGSPSGLQKRHAR. Phosphoserine is present on serine 26. Residues 35 to 120 are inhibitory; the sequence is ARVTVKYDRR…LLAKLRGLHK (86 aa). Threonine 38 is subject to Phosphothreonine; by PKC. The interval 118 to 147 is disordered; the sequence is LHKQPGFPQPSPSDDPSLSPRQDRAHTAPP. 3 positions are modified to phosphoserine: serine 128, serine 134, and serine 136. Residues 138-147 are compositionally biased toward basic and acidic residues; it reads RQDRAHTAPP.

Belongs to the PP1 inhibitor family.

It is found in the cytoplasm. In terms of biological role, inhibitor of PPP1CA. Has over 1000-fold higher inhibitory activity when phosphorylated, creating a molecular switch for regulating the phosphorylation status of PPP1CA substrates and smooth muscle contraction. The sequence is that of Protein phosphatase 1 regulatory subunit 14A (Ppp1r14a) from Mus musculus (Mouse).